We begin with the raw amino-acid sequence, 209 residues long: Urease accessory protein UreG (209 aa).

A GTP-binding site is contributed by 14 to 21 (GPVGSGKT).

The protein belongs to the SIMIBI class G3E GTPase family. UreG subfamily. As to quaternary structure, homodimer. UreD, UreF and UreG form a complex that acts as a GTP-hydrolysis-dependent molecular chaperone, activating the urease apoprotein by helping to assemble the nickel containing metallocenter of UreC. The UreE protein probably delivers the nickel.

It localises to the cytoplasm. Its function is as follows. Facilitates the functional incorporation of the urease nickel metallocenter. This process requires GTP hydrolysis, probably effectuated by UreG. The polypeptide is Urease accessory protein UreG (Rhodopseudomonas palustris (strain ATCC BAA-98 / CGA009)).